The chain runs to 367 residues: 3-dehydroquinate synthase (367 aa).

Residues 112–116 (GVIGD), 136–137 (TT), Lys-149, Lys-158, and 176–179 (TLKT) contribute to the NAD(+) site. Residues Glu-191, His-256, and His-273 each contribute to the Zn(2+) site.

Belongs to the sugar phosphate cyclases superfamily. Dehydroquinate synthase family. NAD(+) serves as cofactor. Co(2+) is required as a cofactor. It depends on Zn(2+) as a cofactor.

It is found in the cytoplasm. It catalyses the reaction 7-phospho-2-dehydro-3-deoxy-D-arabino-heptonate = 3-dehydroquinate + phosphate. The protein operates within metabolic intermediate biosynthesis; chorismate biosynthesis; chorismate from D-erythrose 4-phosphate and phosphoenolpyruvate: step 2/7. Its function is as follows. Catalyzes the conversion of 3-deoxy-D-arabino-heptulosonate 7-phosphate (DAHP) to dehydroquinate (DHQ). This chain is 3-dehydroquinate synthase, found in Prochlorococcus marinus (strain SARG / CCMP1375 / SS120).